Reading from the N-terminus, the 252-residue chain is tRNA (guanine-N(1)-)-methyltransferase (252 aa).

S-adenosyl-L-methionine contacts are provided by residues G117 and 137–142; that span reads IGDYVL.

It belongs to the RNA methyltransferase TrmD family. In terms of assembly, homodimer.

The protein localises to the cytoplasm. The catalysed reaction is guanosine(37) in tRNA + S-adenosyl-L-methionine = N(1)-methylguanosine(37) in tRNA + S-adenosyl-L-homocysteine + H(+). Specifically methylates guanosine-37 in various tRNAs. This is tRNA (guanine-N(1)-)-methyltransferase from Idiomarina loihiensis (strain ATCC BAA-735 / DSM 15497 / L2-TR).